A 383-amino-acid chain; its full sequence is Chromatin structure-remodeling complex subunit SFH1 (383 aa).

Residues 61-80 (DDDEKVHSDNGKGEGEEVGH) are disordered. Basic and acidic residues predominate over residues 64 to 80 (EKVHSDNGKGEGEEVGH).

Belongs to the SNF5 family.

The protein localises to the nucleus. In terms of biological role, part of the chromatin structure-remodeling complex (RSC) which is involved in transcription regulation and nucleosome positioning. RSC is responsible for the transfer of a histone octamer from a nucleosome core particle to naked DNA. The reaction requires ATP and involves an activated RSC-nucleosome intermediate. Remodeling reaction also involves DNA translocation, DNA twist and conformational change. As a reconfigurer of centromeric and flanking nucleosomes, RSC complex is required both for proper kinetochore function in chromosome segregation and, via a PKC1-dependent signaling pathway, for organization of the cellular cytoskeleton. This subunit is essential for mitotic growth and required for cell cycle progression. The sequence is that of Chromatin structure-remodeling complex subunit SFH1 (SFH1) from Eremothecium gossypii (strain ATCC 10895 / CBS 109.51 / FGSC 9923 / NRRL Y-1056) (Yeast).